The following is a 1377-amino-acid chain: Dicer-like protein 2 (1377 aa).

In terms of domain architecture, Helicase ATP-binding spans 23–203 (MFEASLQENI…LSMIESNMNA (181 aa)). 36-43 (MDTGSGKT) contributes to the ATP binding site. Positions 144 to 147 (DEAH) match the DEAH box motif. The region spanning 367–544 (KLEALISFLS…ALALETMAEV (178 aa)) is the Helicase C-terminal domain. One can recognise a Dicer dsRNA-binding fold domain in the interval 563–657 (AVARLHHFCS…LPLTRKPELR (95 aa)). RNase III domains are found at residues 916 to 1056 (ATRL…MDGG) and 1090 to 1274 (NDSL…VDSR). 3 residues coordinate Mg(2+): E1129, D1260, and E1263.

It belongs to the helicase family. Dicer subfamily. It depends on Mg(2+) as a cofactor. Mn(2+) serves as cofactor.

Functionally, dicer-like endonuclease involved in cleaving double-stranded RNA in the RNA interference (RNAi) pathway. Produces 21 to 25 bp dsRNAs (siRNAs) which target the selective destruction of homologous RNAs leading to sequence-specific suppression of gene expression, called post-transcriptional gene silencing (PTGS). Part of a broad host defense response against viral infection and transposons. This chain is Dicer-like protein 2 (dcl2), found in Aspergillus terreus (strain NIH 2624 / FGSC A1156).